A 368-amino-acid polypeptide reads, in one-letter code: Probable protein phosphatase 2C 58 (368 aa).

The PPM-type phosphatase domain maps to 23–329; sequence KFGLSSMQGW…DNMTMILVQF (307 aa). Mn(2+) is bound by residues aspartate 57, glycine 58, aspartate 272, and aspartate 320. Residues 336-368 are disordered; it reads NKNVSPAEQSAADKQPTGDTHWSEIHVTEESSS. A compositionally biased stretch (basic and acidic residues) spans 356 to 368; that stretch reads HWSEIHVTEESSS.

Belongs to the PP2C family. The cofactor is Mg(2+). It depends on Mn(2+) as a cofactor.

It carries out the reaction O-phospho-L-seryl-[protein] + H2O = L-seryl-[protein] + phosphate. It catalyses the reaction O-phospho-L-threonyl-[protein] + H2O = L-threonyl-[protein] + phosphate. This is Probable protein phosphatase 2C 58 from Oryza sativa subsp. japonica (Rice).